A 1892-amino-acid polypeptide reads, in one-letter code: Sodium channel protein type 4 subunit alpha A (1892 aa).

Residues 1 to 125 are Cytoplasmic-facing; that stretch reads MATILPPPGT…RGAIKILIHS (125 aa). A disordered region spans residues 34–54; it reads APKAGAHEEEEPPTPNPDLEA. One copy of the I repeat lies at 107–433; it reads ILSPFSLVRR…VVAMAYDEQN (327 aa). Residues 126 to 144 traverse the membrane as a helical segment; sequence LFSTLIMITILSNCVFMTM. At 145–151 the chain is on the extracellular side; the sequence is SNPPAWS. A helical membrane pass occupies residues 152–172; the sequence is KTVEYVFTGIYTFEATVKVLS. Residues 173–186 are Cytoplasmic-facing; that stretch reads RGFCVGPFTFLRDP. A helical membrane pass occupies residues 187 to 204; that stretch reads WNWLDFMVISMAYITEFV. Topologically, residues 205–210 are extracellular; sequence DLGNVS. N-linked (GlcNAc...) asparagine glycosylation is present at asparagine 208. The chain crosses the membrane as a helical span at residues 211-227; the sequence is ALRTFRVLRALKTITVI. Residues 228–246 lie on the Cytoplasmic side of the membrane; it reads PGLKTIVAALIQSVKKMVD. Residues 247-266 form a helical membrane-spanning segment; that stretch reads VMILTVFALAVFALVGLQLF. Topologically, residues 267-370 are extracellular; the sequence is MGNLRHKCIR…PNYGYTSFDS (104 aa). A disulfide bridge connects residues cysteine 274 and cysteine 339. N-linked (GlcNAc...) asparagine glycans are attached at residues asparagine 281, asparagine 294, and asparagine 341. Residues cysteine 348 and cysteine 354 are joined by a disulfide bond. Residues 371–395 constitute an intramembrane region (pore-forming); it reads FGWAFLALFRLMTQDNWESLFQLTL. The Extracellular portion of the chain corresponds to 396 to 402; sequence RAAGQTY. A helical transmembrane segment spans residues 403–423; the sequence is MLFFVVVIFLGSFYLINLILA. The Cytoplasmic portion of the chain corresponds to 424–612; sequence VVAMAYDEQN…KWVHFVVMDP (189 aa). One copy of the II repeat lies at 594–866; that stretch reads CCEKWVVFKK…QIAIGRITRG (273 aa). A helical transmembrane segment spans residues 613 to 631; the sequence is FVDLAITICIVLNTLFMAM. Residues 632-642 are Extracellular-facing; the sequence is EHYPMTEEFDY. The chain crosses the membrane as a helical span at residues 643–662; the sequence is MLSVGNLVFTGIFAAEMFFK. Topologically, residues 663-676 are cytoplasmic; the sequence is LIAMDPYYYFQVGW. Residues 677–696 form a helical membrane-spanning segment; that stretch reads NIFDSIIVTLSLVELGLANV. The Extracellular portion of the chain corresponds to 697–698; it reads QG. Residues 699–716 traverse the membrane as a helical segment; that stretch reads LSVLRSFRLLRVFKLAKS. At 717-732 the chain is on the cytoplasmic side; it reads WPTLNMLIKIIGNSVG. Residues 733 to 751 form a helical membrane-spanning segment; that stretch reads ALGNLTLVLAIIVFIFAVV. At 752–780 the chain is on the extracellular side; that stretch reads GMQLFGKSYKDCVCKISSDCELPRWHMND. Residues cysteine 765 and cysteine 771 are joined by a disulfide bond. Positions 781–801 form an intramembrane region, pore-forming; sequence FFHSFLIVFRILCGEWIETMW. Topologically, residues 802–812 are extracellular; the sequence is DCMEVAGAGMC. Cysteines 803 and 812 form a disulfide. The helical transmembrane segment at 813-831 threads the bilayer; that stretch reads LVVFMMVMVIGNLVVLNLF. Residues 832 to 1071 are Cytoplasmic-facing; that stretch reads LALLLSSFSG…TCFTIVEHDW (240 aa). 2 disordered regions span residues 884-905 and 945-982; these read REPQ…TEGM and LGES…GVED. The span at 948-971 shows a compositional bias: acidic residues; that stretch reads SDSENPSEDDDDQEDDVDSEVTCE. The stretch at 1052–1366 is one III repeat; it reads KGKKWWNLRK…KKYYEAMKKL (315 aa). Residues 1072–1089 form a helical membrane-spanning segment; that stretch reads FETFIIFMILLSSGALAF. Residues 1090–1102 lie on the Extracellular side of the membrane; sequence EDIYIERRRTVKI. Residues 1103–1121 traverse the membrane as a helical segment; it reads VLEFADKVFTFIFVIEMLL. Topologically, residues 1122-1135 are cytoplasmic; it reads KWVAYGFKTYFTNA. A helical transmembrane segment spans residues 1136 to 1154; that stretch reads WCWLDFFIVDISLISLSAN. Residues 1155 to 1162 lie on the Extracellular side of the membrane; the sequence is LMGFSDLG. A helical transmembrane segment spans residues 1163–1181; the sequence is PIKSLRTLRALRPLRALSR. Over 1182–1198 the chain is Cytoplasmic; the sequence is FEGMRVVVNALIGAIPS. The chain crosses the membrane as a helical span at residues 1199–1218; sequence IFNVLLVCLIFWLIFSIMGV. Over 1219 to 1270 the chain is Extracellular; it reads NLFAGKFYRCINTTTAELFPISVVNNKSDCVALQEATQEARWVNVKVNYDNV. Cysteine 1228 and cysteine 1248 are disulfide-bonded. Residues asparagine 1230 and asparagine 1244 are each glycosylated (N-linked (GlcNAc...) asparagine). The pore-forming intramembrane region spans 1271–1292; the sequence is AKGYLSLLQIATFKGWMDIMYP. Residues 1293–1309 are Extracellular-facing; the sequence is AVDSREVEEQPSYEINL. A helical transmembrane segment spans residues 1310–1331; it reads YMYIYFVIFIIFGSFFTLNLFI. Residues 1332 to 1394 lie on the Cytoplasmic side of the membrane; that stretch reads GVIIDNFNQQ…LVFDFISQQF (63 aa). Residues 1350–1352 are important for rapid channel inactivation; it reads IFM. The stretch at 1375–1673 is one IV repeat; it reads IPRPANLIQG…WEKFDTGGTQ (299 aa). The chain crosses the membrane as a helical span at residues 1395 to 1412; sequence FDIFIMVLICLNMVTMMV. The Extracellular segment spans residues 1413–1423; that stretch reads ETDDQSPAKED. Residues 1424–1442 form a helical membrane-spanning segment; it reads FLFKVNVAFIVVFTGECTL. The Cytoplasmic segment spans residues 1443-1454; that stretch reads KLFALRHYFFTN. A helical transmembrane segment spans residues 1455 to 1472; the sequence is GWNIFDFIVVILSIAGTM. At 1473–1485 the chain is on the extracellular side; sequence LSDIIEKYFVSPT. A helical transmembrane segment spans residues 1486–1502; the sequence is LFRVIRLARIGRILRLI. Over 1503–1521 the chain is Cytoplasmic; the sequence is KGARGIRTLLFALMMSLPA. The helical transmembrane segment at 1522–1539 threads the bilayer; the sequence is LFNIGLLLFLIMFIFSIF. Topologically, residues 1540–1561 are extracellular; the sequence is GMSNFAYVKKEAGINDMFNFET. The segment at residues 1562–1584 is an intramembrane region (pore-forming); that stretch reads FGSSIICLFQITTSAGWDTLLLP. The Extracellular segment spans residues 1585 to 1614; it reads MLNKEPPDCDPAFENPGTDVKGNCGNPMMG. Cysteines 1593 and 1608 form a disulfide. Residues 1615–1637 form a helical membrane-spanning segment; that stretch reads MVFFCSYIIISFLVVVNMYIAII. Residues 1638 to 1892 are Cytoplasmic-facing; it reads LENFNVAQEE…TQTILRETNV (255 aa). The IQ domain occupies 1767–1796; sequence EDMAAVVIQRAYRNHLHKRGIHHAAYIQRS. The segment at 1836–1856 is disordered; the sequence is RRRPDPQTRCSGARCSPEPPE.

This sequence belongs to the sodium channel (TC 1.A.1.10) family. Nav1.4/SCN4A subfamily. As to quaternary structure, voltage-gated sodium (Nav) channels consist of an ion-conducting alpha subunit which is functional on its own associated with regulatory beta subunits.

It localises to the cell membrane. The enzyme catalyses Na(+)(in) = Na(+)(out). Functionally, pore-forming subunit of a voltage-gated sodium (Nav) channel that directly mediates the depolarizing phase of action potentials in excitable membranes. Navs, also called VGSCs (voltage-gated sodium channels) or VDSCs (voltage-dependent sodium channels), operate by switching between closed and open conformations depending on the voltage difference across the membrane. In the open conformation they allow Na(+) ions to selectively pass through the pore, along their electrochemical gradient. The influx of Na+ ions provokes membrane depolarization, initiating the propagation of electrical signals throughout cells and tissues. This Takifugu rubripes (Japanese pufferfish) protein is Sodium channel protein type 4 subunit alpha A (scn4aa).